A 360-amino-acid polypeptide reads, in one-letter code: Peptide chain release factor 1 (360 aa).

Gln235 carries the N5-methylglutamine modification.

It belongs to the prokaryotic/mitochondrial release factor family. Methylated by PrmC. Methylation increases the termination efficiency of RF1.

Its subcellular location is the cytoplasm. Its function is as follows. Peptide chain release factor 1 directs the termination of translation in response to the peptide chain termination codons UAG and UAA. The chain is Peptide chain release factor 1 from Dechloromonas aromatica (strain RCB).